A 338-amino-acid chain; its full sequence is Ketol-acid reductoisomerase (NADP(+)) (338 aa).

The 181-residue stretch at 1-181 (MKVFYDKDCD…GGGKAGIIET (181 aa)) folds into the KARI N-terminal Rossmann domain. NADP(+)-binding positions include 24–27 (YGSQ), Arg-47, and Ser-52. Residue His-107 is part of the active site. Gly-133 serves as a coordination point for NADP(+). The KARI C-terminal knotted domain occupies 182-327 (NFKEETETDL…AQLRAMMPWI (146 aa)). The Mg(2+) site is built by Asp-190, Glu-194, Glu-226, and Glu-230. Ser-251 is a substrate binding site.

This sequence belongs to the ketol-acid reductoisomerase family. Mg(2+) serves as cofactor.

The catalysed reaction is (2R)-2,3-dihydroxy-3-methylbutanoate + NADP(+) = (2S)-2-acetolactate + NADPH + H(+). The enzyme catalyses (2R,3R)-2,3-dihydroxy-3-methylpentanoate + NADP(+) = (S)-2-ethyl-2-hydroxy-3-oxobutanoate + NADPH + H(+). It participates in amino-acid biosynthesis; L-isoleucine biosynthesis; L-isoleucine from 2-oxobutanoate: step 2/4. Its pathway is amino-acid biosynthesis; L-valine biosynthesis; L-valine from pyruvate: step 2/4. Its function is as follows. Involved in the biosynthesis of branched-chain amino acids (BCAA). Catalyzes an alkyl-migration followed by a ketol-acid reduction of (S)-2-acetolactate (S2AL) to yield (R)-2,3-dihydroxy-isovalerate. In the isomerase reaction, S2AL is rearranged via a Mg-dependent methyl migration to produce 3-hydroxy-3-methyl-2-ketobutyrate (HMKB). In the reductase reaction, this 2-ketoacid undergoes a metal-dependent reduction by NADPH to yield (R)-2,3-dihydroxy-isovalerate. In Paracidovorax citrulli (strain AAC00-1) (Acidovorax citrulli), this protein is Ketol-acid reductoisomerase (NADP(+)).